Consider the following 235-residue polypeptide: Voltage-gated hydrogen channel 1 (235 aa).

The Cytoplasmic segment spans residues 1–65; the sequence is MSRYLKHFTA…SLRKLYSTER (65 aa). The chain crosses the membrane as a helical span at residues 66–86; it reads FQIVVVCLVVLDAIFVLCELL. Topologically, residues 87 to 103 are extracellular; sequence IDLSIIEADHHRIAPQV. A helical membrane pass occupies residues 104–126; sequence FHYLSLALLTFFMVELAGKIFAY. Residues 127–134 lie on the Cytoplasmic side of the membrane; the sequence is RLEFLHHK. A helical membrane pass occupies residues 135–155; that stretch reads FEVFDGIVVVVSFILDIIYIS. At 156 to 162 the chain is on the extracellular side; the sequence is KEDAFDA. The helical transmembrane segment at 163-183 threads the bilayer; sequence MGLLILLRLWRVARIINGILV. Over 184–235 the chain is Cytoplasmic; it reads SVQNRANHRVEKLKEINESLVHQVNELKEQNTKMDQENVRLRALLKDHSIDF. The stretch at 187-231 forms a coiled coil; sequence NRANHRVEKLKEINESLVHQVNELKEQNTKMDQENVRLRALLKDH.

It belongs to the hydrogen channel family. In terms of assembly, homodimer.

It localises to the membrane. The protein localises to the cell membrane. Its function is as follows. Mediates the voltage-dependent proton permeability of excitable membranes. Forms a proton-selective channel through which protons may pass in accordance with their electrochemical gradient. The protein is Voltage-gated hydrogen channel 1 (hvcn1) of Danio rerio (Zebrafish).